A 297-amino-acid polypeptide reads, in one-letter code: Large ribosomal subunit protein uL18 (297 aa).

Positions 258–267 (KKAHPKKRWT) are enriched in basic residues. The interval 258–277 (KKAHPKKRWTEKKLTREQRQ) is disordered. Positions 268–277 (EKKLTREQRQ) are enriched in basic and acidic residues.

It belongs to the universal ribosomal protein uL18 family. Component of the large ribosomal subunit (LSU).

It localises to the cytoplasm. Its subcellular location is the nucleus. Component of the ribosome, a large ribonucleoprotein complex responsible for the synthesis of proteins in the cell. The small ribosomal subunit (SSU) binds messenger RNAs (mRNAs) and translates the encoded message by selecting cognate aminoacyl-transfer RNA (tRNA) molecules. The large subunit (LSU) contains the ribosomal catalytic site termed the peptidyl transferase center (PTC), which catalyzes the formation of peptide bonds, thereby polymerizing the amino acids delivered by tRNAs into a polypeptide chain. The nascent polypeptides leave the ribosome through a tunnel in the LSU and interact with protein factors that function in enzymatic processing, targeting, and the membrane insertion of nascent chains at the exit of the ribosomal tunnel. The sequence is that of Large ribosomal subunit protein uL18 (RPL5A) from Helianthus annuus (Common sunflower).